We begin with the raw amino-acid sequence, 245 residues long: 2,3,4,5-tetrahydropyridine-2,6-dicarboxylate N-acetyltransferase (245 aa).

Belongs to the transferase hexapeptide repeat family. DapH subfamily.

It carries out the reaction (S)-2,3,4,5-tetrahydrodipicolinate + acetyl-CoA + H2O = L-2-acetamido-6-oxoheptanedioate + CoA. It participates in amino-acid biosynthesis; L-lysine biosynthesis via DAP pathway; LL-2,6-diaminopimelate from (S)-tetrahydrodipicolinate (acetylase route): step 1/3. Functionally, catalyzes the transfer of an acetyl group from acetyl-CoA to tetrahydrodipicolinate. In Methanopyrus kandleri (strain AV19 / DSM 6324 / JCM 9639 / NBRC 100938), this protein is 2,3,4,5-tetrahydropyridine-2,6-dicarboxylate N-acetyltransferase.